Here is a 325-residue protein sequence, read N- to C-terminus: Undecaprenyl-phosphate 4-deoxy-4-formamido-L-arabinose transferase (325 aa).

Transmembrane regions (helical) follow at residues 236–256 (LSIF…LLIL) and 270–290 (VFTL…GMGL).

This sequence belongs to the glycosyltransferase 2 family.

Its subcellular location is the cell inner membrane. The catalysed reaction is UDP-4-deoxy-4-formamido-beta-L-arabinose + di-trans,octa-cis-undecaprenyl phosphate = 4-deoxy-4-formamido-alpha-L-arabinopyranosyl di-trans,octa-cis-undecaprenyl phosphate + UDP. The protein operates within glycolipid biosynthesis; 4-amino-4-deoxy-alpha-L-arabinose undecaprenyl phosphate biosynthesis; 4-amino-4-deoxy-alpha-L-arabinose undecaprenyl phosphate from UDP-4-deoxy-4-formamido-beta-L-arabinose and undecaprenyl phosphate: step 1/2. Its pathway is bacterial outer membrane biogenesis; lipopolysaccharide biosynthesis. Its function is as follows. Catalyzes the transfer of 4-deoxy-4-formamido-L-arabinose from UDP to undecaprenyl phosphate. The modified arabinose is attached to lipid A and is required for resistance to polymyxin and cationic antimicrobial peptides. This is Undecaprenyl-phosphate 4-deoxy-4-formamido-L-arabinose transferase from Edwardsiella ictaluri (strain 93-146).